The sequence spans 498 residues: NAC domain-containing protein 75 (498 aa).

The 168-residue stretch at 48–215 (LPAGVKFDPT…ELVVSKIFYQ (168 aa)) folds into the NAC domain. Residues 166–221 (KGCKKILVLYTNFGKNRKPEKTNWVMHQYHLGTHEEEKEGELVVSKIFYQTQPRQC) mediate DNA binding. Disordered stretches follow at residues 225–278 (SSTS…PNRS), 338–374 (VMAE…QRHH), 423–443 (QQQL…GGRS), and 457–498 (STTH…DHHG). Residues 233–248 (IGGGGGEASSGGGGGE) show a composition bias toward gly residues. The segment covering 256 to 266 (GTTSGGSCSSS) has biased composition (low complexity). The segment covering 356–374 (HMAHDHHHHHHQQQQQRHH) has biased composition (basic residues). Residues 466–475 (GSSSMGNQQE) show a composition bias toward polar residues.

Expressed in the vascular cylinder of roots. Expressed in the differentiation zone of the root stele.

It is found in the nucleus. In terms of biological role, transcription activator involved in xylem formation. Promotes the expression of the secondary wall-associated transcription factor MYB46. Functions upstream of NAC030/VND7, a master switch of xylem vessel differentiation. Acts as a upstream regulator of NAC101/VND6 and LBD30/ASL19. This is NAC domain-containing protein 75 from Arabidopsis thaliana (Mouse-ear cress).